Here is a 72-residue protein sequence, read N- to C-terminus: Disintegrin crotatroxin (72 aa).

The Disintegrin domain occupies 1–72 (AGEECDCGSP…ADCPRNGLYG (72 aa)). 6 disulfides stabilise this stretch: C5-C20, C7-C15, C14-C37, C28-C34, C33-C58, and C46-C65. The Cell attachment site motif lies at 50-52 (RGD).

Belongs to the venom metalloproteinase (M12B) family. P-II subfamily. P-IIa sub-subfamily. Monomer. As to expression, expressed by the venom gland.

It localises to the secreted. In terms of biological role, inhibits fibrinogen interaction with platelets. Acts by binding to the alpha-IIb/beta-3 (ITGA2B/ITGB3) on the platelet surface and inhibits aggregation induced by ADP, thrombin, platelet-activating factor and collagen. Functionally, inhibits ADP-induced platelet aggregation (IC(50) = 17.5nM), cancer cell migration in vitro, and experimental lung tumor colonization of cancer cells. The polypeptide is Disintegrin crotatroxin (Crotalus atrox (Western diamondback rattlesnake)).